The sequence spans 359 residues: TGACG-sequence-specific DNA-binding protein TGA-1A (359 aa).

Basic and acidic residues predominate over residues 44–54 (KRLDNETEDTS). Positions 44–72 (KRLDNETEDTSHGTVGTSNRYEPETSKPV) are disordered. A bZIP domain is found at 72–135 (VEKVLRRLAQ…GGVDASQLSY (64 aa)). Residues 73 to 125 (EKVLRRLAQNREAARKSRLRKKAYVQQLENSKLKLIQLEQELERARKQGMCVG) adopt a coiled-coil conformation. The segment at 74 to 94 (KVLRRLAQNREAARKSRLRKK) is basic motif. A leucine-zipper region spans residues 100–114 (LENSKLKLIQLEQEL). A DOG1 domain is found at 143–354 (TAVFDMEYGH…RVLSSQWATR (212 aa)).

It belongs to the bZIP family. In terms of assembly, binds DNA as a dimer.

Its subcellular location is the nucleus. In terms of biological role, transcriptional activator that binds specifically to the DNA sequence 5'-TGACG-3'. Recognizes ocs elements like the as-1 motif of the cauliflower mosaic virus 35S promoter. Binding to the as-1-like cis elements mediate auxin- and salicylic acid-inducible transcription. Could also bind to the Hex-motif (5'-TGACGTGG-3') another cis-acting element found in plant histone promoters. This is TGACG-sequence-specific DNA-binding protein TGA-1A (TGA1A) from Nicotiana tabacum (Common tobacco).